We begin with the raw amino-acid sequence, 275 residues long: 2,3,4,5-tetrahydropyridine-2,6-dicarboxylate N-succinyltransferase (275 aa).

Substrate is bound by residues R106 and D143.

The protein belongs to the transferase hexapeptide repeat family. In terms of assembly, homotrimer.

Its subcellular location is the cytoplasm. It catalyses the reaction (S)-2,3,4,5-tetrahydrodipicolinate + succinyl-CoA + H2O = (S)-2-succinylamino-6-oxoheptanedioate + CoA. Its pathway is amino-acid biosynthesis; L-lysine biosynthesis via DAP pathway; LL-2,6-diaminopimelate from (S)-tetrahydrodipicolinate (succinylase route): step 1/3. The sequence is that of 2,3,4,5-tetrahydropyridine-2,6-dicarboxylate N-succinyltransferase from Cupriavidus necator (strain ATCC 17699 / DSM 428 / KCTC 22496 / NCIMB 10442 / H16 / Stanier 337) (Ralstonia eutropha).